The primary structure comprises 380 residues: Cytochrome b (380 aa).

The next 4 helical transmembrane spans lie at 34 to 54, 78 to 99, 114 to 134, and 179 to 199; these read FGSL…LLAM, WLIR…YLHI, WNTG…GYVL, and FFAL…IHLT. 2 residues coordinate heme b: His-84 and His-98. The heme b site is built by His-183 and His-197. An a ubiquinone-binding site is contributed by His-202. The next 4 helical transmembrane spans lie at 227–247, 289–309, 321–341, and 348–368; these read LKDI…ALFS, LGGV…PFLH, ISQL…WVGS, and FIII…ILFP.

This sequence belongs to the cytochrome b family. As to quaternary structure, the cytochrome bc1 complex contains 11 subunits: 3 respiratory subunits (MT-CYB, CYC1 and UQCRFS1), 2 core proteins (UQCRC1 and UQCRC2) and 6 low-molecular weight proteins (UQCRH/QCR6, UQCRB/QCR7, UQCRQ/QCR8, UQCR10/QCR9, UQCR11/QCR10 and a cleavage product of UQCRFS1). This cytochrome bc1 complex then forms a dimer. Requires heme b as cofactor.

It localises to the mitochondrion inner membrane. Component of the ubiquinol-cytochrome c reductase complex (complex III or cytochrome b-c1 complex) that is part of the mitochondrial respiratory chain. The b-c1 complex mediates electron transfer from ubiquinol to cytochrome c. Contributes to the generation of a proton gradient across the mitochondrial membrane that is then used for ATP synthesis. This Pelecanoides garnotii (Peruvian diving petrel) protein is Cytochrome b (MT-CYB).